The chain runs to 353 residues: Ig alpha-1 chain C region (353 aa).

Positions 6 to 98 (PKVFPLSLCS…HYTNPSQDVT (93 aa)) constitute an Ig-like 1 domain. 2 cysteine pairs are disulfide-bonded: cysteine 26–cysteine 85 and cysteine 77–cysteine 101. Residues 96–121 (DVTVPCRVPSTPPTPSPSTPPTPSPP) are disordered. Pro residues predominate over residues 105-121 (STPPTPSPSTPPTPSPP). 3 disulfides stabilise this stretch: cysteine 123–cysteine 180, cysteine 147–cysteine 204, and cysteine 250–cysteine 313. Ig-like domains follow at residues 125-220 (PRLS…ATLS) and 228-330 (PEVH…KTID). Asparagine 144 is a glycosylation site (N-linked (GlcNAc...) asparagine). Asparagine 340 carries an N-linked (GlcNAc...) asparagine glycan. Cysteine 352 is a 3-hydroxy-L-kynurenine binding site.

As to quaternary structure, monomeric or polymeric. In terms of processing, 3-Hydroxykynurenine, an oxidized tryptophan metabolite that is common in biological fluids, reacts with alpha-1-microglobulin to form heterogeneous polycyclic chromophores including hydroxanthommatin. The chromophore reacts with accessible cysteines forming non-reducible thioether cross-links with Ig alpha-1 chain C region Cys-352.

In terms of biological role, ig alpha is the major immunoglobulin class in body secretions. It may serve both to defend against local infection and to prevent access of foreign antigens to the general immunologic system. The polypeptide is Ig alpha-1 chain C region (IGHA1) (Gorilla gorilla gorilla (Western lowland gorilla)).